The sequence spans 368 residues: 3-isopropylmalate dehydrogenase (368 aa).

79 to 91 (GPEWGTSSTVRPE) contributes to the NAD(+) binding site. Substrate-binding residues include arginine 98, arginine 108, arginine 137, and aspartate 226. Residues aspartate 226, aspartate 251, and aspartate 255 each contribute to the Mg(2+) site. Residue 291–303 (GSAPDISGKGIVN) participates in NAD(+) binding.

This sequence belongs to the isocitrate and isopropylmalate dehydrogenases family. As to quaternary structure, homodimer. Mg(2+) is required as a cofactor. Mn(2+) serves as cofactor.

Its subcellular location is the cytoplasm. The catalysed reaction is (2R,3S)-3-isopropylmalate + NAD(+) = 4-methyl-2-oxopentanoate + CO2 + NADH. Its pathway is amino-acid biosynthesis; L-leucine biosynthesis; L-leucine from 3-methyl-2-oxobutanoate: step 3/4. Functionally, catalyzes the oxidation of 3-carboxy-2-hydroxy-4-methylpentanoate (3-isopropylmalate) to 3-carboxy-4-methyl-2-oxopentanoate. The product decarboxylates to 4-methyl-2 oxopentanoate. The chain is 3-isopropylmalate dehydrogenase (LEU1) from Sordaria macrospora.